The sequence spans 842 residues: TATA box-binding protein-associated factor, RNA polymerase I, subunit C (842 aa).

Disordered stretches follow at residues 574–605, 667–690, and 702–842; these read SSLR…PSWT, RPGD…QQDE, and QAAA…RMGF. Basic and acidic residues predominate over residues 577–588; sequence REPDHPAPERPA. Residues 745-760 are compositionally biased toward polar residues; sequence DASSAPHSQDLSNSEA. Residues 783–794 are compositionally biased toward basic and acidic residues; the sequence is QHERRQTLRDYM. At Thr-808 the chain carries Phosphothreonine. Over residues 809–826 the composition is skewed to low complexity; sequence PPSQTSSRQTRSFRQQTP. Residues 833–842 show a composition bias toward basic residues; the sequence is PPRKKPRMGF.

Component of the transcription factor SL1/TIF-IB complex, composed of TBP and at least TAF1A, TAF1B, TAF1C and TAF1D. In the complex interacts directly with TBP, TAF1A and TAF1B. Interaction of the SL1/TIF-IB subunits with TBP excludes interaction of TBP with the transcription factor IID (TFIID) subunits. Interacts with MYC and RRN3. Interacts with p53/TP53; the interaction prevents the association of SL1/TIF-IB with UBTF and represses RNA polymerase I transcription. Part of Pol I pre-initiation complex (PIC), in which Pol I core assembles with RRN3 and promoter-bound UTBF and SL1/TIF-IB complex.

It is found in the nucleus. The protein localises to the nucleolus. Its function is as follows. Component of the transcription factor SL1/TIF-IB complex, which is involved in the assembly of the PIC (pre-initiation complex) during RNA polymerase I-dependent transcription. The rate of PIC formation probably is primarily dependent on the rate of association of SL1/TIF-IB with the rDNA promoter. SL1/TIF-IB is involved in stabilization of nucleolar transcription factor 1/UBTF on rDNA. Formation of SL1/TIF-IB excludes the association of TBP with TFIID subunits. Recruits RNA polymerase I to the rRNA gene promoter via interaction with RRN3. This chain is TATA box-binding protein-associated factor, RNA polymerase I, subunit C (Taf1c), found in Rattus norvegicus (Rat).